Reading from the N-terminus, the 400-residue chain is MRILHTSDWHLGQNFYSKSREAEHQAFLDWLLETAQTHQVDAIIVAGDVFDTGSPPSYARTLYNRFVVNLQQTGCHLVVLAGNHDSVATLNESRDIMAFLNTTVVASAGHAPQILPRRDGTPGAVLCPIPFLRPRDIITSQAGLNGIEKQQHLLAAITDYYQQHYADACKLRGDQPLPIIATGHLTTVGASKSDAVRDIYIGTLDAFPAQNFPPADYIALGHIHRAQIIGGMEHVRYCGSPIPLSFDECGKSKYVHLVTFSNGKLESVENLNVPVTQPMAVLKGDLASITAQLEQWRDVSQEPPVWLDIEITTDEYLHDIQRKIQALTESLPVEVLLVRRSREQRERVLASQQRETLSELSVEEVFNRRLALEELDESQQQRLQHLFTTTLHTLAGEHEA.

The protein belongs to the SbcD family. In terms of assembly, heterodimer of SbcC and SbcD.

Functionally, sbcCD cleaves DNA hairpin structures. These structures can inhibit DNA replication and are intermediates in certain DNA recombination reactions. The complex acts as a 3'-&gt;5' double strand exonuclease that can open hairpins. It also has a 5' single-strand endonuclease activity. This Escherichia coli O157:H7 protein is Nuclease SbcCD subunit D (sbcD).